A 645-amino-acid polypeptide reads, in one-letter code: UPF0313 protein CLB_0243 (645 aa).

Residues 295–566 (AIKEVKFSIT…RMQRALLQFS (272 aa)) form the Radical SAM core domain. Positions 309, 313, and 316 each coordinate [4Fe-4S] cluster. Residues 598 to 645 (NKPYKKSHKKNNAKNNNNHYNKNNNYNKNKDISKKNKKNSLSKHKKRK) are disordered. Over residues 600–609 (PYKKSHKKNN) the composition is skewed to basic residues. A compositionally biased stretch (low complexity) spans 610–624 (AKNNNNHYNKNNNYN). Positions 632–645 (KNKKNSLSKHKKRK) are enriched in basic residues.

The protein belongs to the UPF0313 family. Requires [4Fe-4S] cluster as cofactor.

The polypeptide is UPF0313 protein CLB_0243 (Clostridium botulinum (strain ATCC 19397 / Type A)).